Consider the following 638-residue polypeptide: 1-deoxy-D-xylulose-5-phosphate synthase (638 aa).

Thiamine diphosphate-binding positions include His-76 and 117-119 (AHS). Residue Asp-148 coordinates Mg(2+). Residues 149–150 (GS), Asn-177, Tyr-287, and Glu-369 each bind thiamine diphosphate. Asn-177 is a Mg(2+) binding site.

The protein belongs to the transketolase family. DXPS subfamily. In terms of assembly, homodimer. Mg(2+) is required as a cofactor. Thiamine diphosphate serves as cofactor.

The catalysed reaction is D-glyceraldehyde 3-phosphate + pyruvate + H(+) = 1-deoxy-D-xylulose 5-phosphate + CO2. It functions in the pathway metabolic intermediate biosynthesis; 1-deoxy-D-xylulose 5-phosphate biosynthesis; 1-deoxy-D-xylulose 5-phosphate from D-glyceraldehyde 3-phosphate and pyruvate: step 1/1. Its function is as follows. Catalyzes the acyloin condensation reaction between C atoms 2 and 3 of pyruvate and glyceraldehyde 3-phosphate to yield 1-deoxy-D-xylulose-5-phosphate (DXP). The sequence is that of 1-deoxy-D-xylulose-5-phosphate synthase from Rhodopseudomonas palustris (strain BisB5).